Here is a 568-residue protein sequence, read N- to C-terminus: Protein AF-9 (568 aa).

The region spanning 1–138 (MASSCAVQVK…EDFRRKLLKA (138 aa)) is the YEATS domain. Histone H3K9cr binding stretches follow at residues 78 to 80 (YAG) and 106 to 108 (LHL). Residues 138-475 (AGGDPNRSIH…PPPPLLKTNN (338 aa)) are disordered. Low complexity predominate over residues 149–190 (SSSSSSSSSSSSSSSSSSSSSSSSSSSSSSSSSSSSSSSSSS). Basic and acidic residues predominate over residues 202 to 265 (EHKEKPSKDS…PKPMSKEPKP (64 aa)). Residues Ser-288 and Ser-294 each carry the phosphoserine modification. Positions 295-300 (AKKRKK) match the Nuclear localization signal motif. Residues 303 to 313 (SEALFKSFSSA) show a composition bias toward low complexity. Positions 322 to 349 (ADKKQIKDKSHVKMGKVKIESETSEKKK) are enriched in basic and acidic residues. Residue Lys-339 forms a Glycyl lysine isopeptide (Lys-Gly) (interchain with G-Cter in SUMO2) linkage. The span at 357 to 368 (DIVDPNDSDVEE) shows a compositional bias: acidic residues. The span at 371-395 (SSKSDSEQPSPASSSSSSSSSFTPS) shows a compositional bias: low complexity. Residues Ser-412 and Ser-419 each carry the phosphoserine modification. A compositionally biased stretch (acidic residues) spans 414–429 (DNEEESDEVEDNDNDS). Residues 445–461 (VSLSDGSDSESSSASSP) show a composition bias toward low complexity. Ser-483 is modified (phosphoserine).

In terms of assembly, component of the super elongation complex (SEC), at least composed of EAF1, EAF2, CDK9, MLLT3/AF9, AFF (AFF1 or AFF4), the P-TEFb complex and ELL (ELL, ELL2 or ELL3). Interacts with BCOR. Interacts with CBX8. Interacts with ALKBH4. In terms of tissue distribution, enriched in undifferentiated hematopoietic stem cells in fetal liver, cord blood and bone marrow.

Its subcellular location is the nucleus. The protein localises to the chromosome. Its activity is regulated as follows. Crotonylated lysine binding is strongly inhibited by the peptide XL-07i, carrying a 2-furancarbonyl side chain and capped with a hydrophobic carboxybenzyl group. XL-07i targets the unique pi-pi-pi stacking interaction at the crotonylation recognition site. Chromatin reader component of the super elongation complex (SEC), a complex required to increase the catalytic rate of RNA polymerase II transcription by suppressing transient pausing by the polymerase at multiple sites along the DNA. Specifically recognizes and binds acylated histone H3, with a preference for histone H3 that is crotonylated. Crotonylation marks active promoters and enhancers and confers resistance to transcriptional repressors. Recognizes and binds histone H3 crotonylated at 'Lys-9' (H3K9cr), and with slightly lower affinity histone H3 crotonylated at 'Lys-18' (H3K18cr). Also recognizes and binds histone H3 acetylated and butyrylated at 'Lys-9' (H3K9ac and H3K9bu, respectively), but with lower affinity than crotonylated histone H3. In the SEC complex, MLLT3 is required to recruit the complex to crotonylated histones. Recruitment of the SEC complex to crotonylated histones promotes recruitment of DOT1L on active chromatin to deposit histone H3 'Lys-79' methylation (H3K79me). Plays a key role in hematopoietic stem cell (HSC) maintenance by preserving, rather than conferring, HSC stemness. Acts by binding to the transcription start site of active genes in HSCs and sustaining level of H3K79me2, probably by recruiting DOT1L. The polypeptide is Protein AF-9 (Homo sapiens (Human)).